We begin with the raw amino-acid sequence, 290 residues long: 33 kDa chaperonin (290 aa).

Disulfide bonds link cysteine 231-cysteine 233 and cysteine 263-cysteine 266.

The protein belongs to the HSP33 family. Post-translationally, under oxidizing conditions two disulfide bonds are formed involving the reactive cysteines. Under reducing conditions zinc is bound to the reactive cysteines and the protein is inactive.

It localises to the cytoplasm. Functionally, redox regulated molecular chaperone. Protects both thermally unfolding and oxidatively damaged proteins from irreversible aggregation. Plays an important role in the bacterial defense system toward oxidative stress. This chain is 33 kDa chaperonin, found in Thermotoga sp. (strain RQ2).